The primary structure comprises 188 residues: Elongation factor P-like protein (188 aa).

The protein belongs to the elongation factor P family.

The sequence is that of Elongation factor P-like protein from Xylella fastidiosa (strain M23).